The sequence spans 226 residues: Peptidyl-prolyl cis-trans isomerase CYP23 (226 aa).

The N-terminal stretch at 1-22 (MGITRNLILGLACLAFVSIAKA) is a signal peptide. The PPIase cyclophilin-type domain occupies 34–191 (VVFQTSYGDI…ERITILSTYY (158 aa)).

It belongs to the cyclophilin-type PPIase family. Ubiquitous. Lower expression in roots.

Its subcellular location is the endoplasmic reticulum. It carries out the reaction [protein]-peptidylproline (omega=180) = [protein]-peptidylproline (omega=0). Functionally, PPIases accelerate the folding of proteins. It catalyzes the cis-trans isomerization of proline imidic peptide bonds in oligopeptides. In Arabidopsis thaliana (Mouse-ear cress), this protein is Peptidyl-prolyl cis-trans isomerase CYP23 (CYP23).